Reading from the N-terminus, the 385-residue chain is Aspartate/prephenate aminotransferase (385 aa).

Positions 39, 125, and 175 each coordinate L-aspartate. K234 bears the N6-(pyridoxal phosphate)lysine mark. R361 serves as a coordination point for L-aspartate.

The protein belongs to the class-I pyridoxal-phosphate-dependent aminotransferase family. In terms of assembly, homodimer. Pyridoxal 5'-phosphate serves as cofactor.

Its subcellular location is the cytoplasm. The catalysed reaction is L-aspartate + 2-oxoglutarate = oxaloacetate + L-glutamate. It carries out the reaction L-arogenate + oxaloacetate = prephenate + L-aspartate. Functionally, catalyzes the reversible conversion of aspartate and 2-oxoglutarate to glutamate and oxaloacetate. Can also transaminate prephenate in the presence of aspartate. This Thermus thermophilus (strain ATCC 27634 / DSM 579 / HB8) protein is Aspartate/prephenate aminotransferase (aspC).